We begin with the raw amino-acid sequence, 348 residues long: Mannonate dehydratase (348 aa).

Belongs to the mannonate dehydratase family. Fe(2+) serves as cofactor. The cofactor is Mn(2+).

It catalyses the reaction D-mannonate = 2-dehydro-3-deoxy-D-gluconate + H2O. Its pathway is carbohydrate metabolism; pentose and glucuronate interconversion. Functionally, catalyzes the dehydration of D-mannonate. The sequence is that of Mannonate dehydratase from Streptococcus agalactiae serotype III (strain NEM316).